The chain runs to 200 residues: Probable GTP-binding protein EngB (200 aa).

The EngB-type G domain maps to 26–200 (SIPEVALAGR…IYEIAQCIKK (175 aa)). GTP is bound by residues 34 to 41 (GRSNVGKS), 61 to 65 (GCTRQ), 80 to 83 (DLPG), 147 to 150 (TKID), and 179 to 181 (VSS). Mg(2+) is bound by residues serine 41 and threonine 63.

This sequence belongs to the TRAFAC class TrmE-Era-EngA-EngB-Septin-like GTPase superfamily. EngB GTPase family. Mg(2+) serves as cofactor.

Functionally, necessary for normal cell division and for the maintenance of normal septation. This chain is Probable GTP-binding protein EngB, found in Ehrlichia ruminantium (strain Gardel).